The primary structure comprises 711 residues: Far upstream element-binding protein 2 (711 aa).

Positions 1–147 (MSDYSTGGPP…HPPPRTSMTE (147 aa)) are disordered. S2 is modified (N-acetylserine). The span at 8-17 (GPPPGPPPPA) shows a compositional bias: pro residues. 2 stretches are compositionally biased toward gly residues: residues 18–28 (GGGGGAGGAGG) and 36–68 (GAGD…GGPG). Omega-N-methylarginine is present on R40. N6-acetyllysine is present on K87. S99 is subject to Phosphoserine. T100 bears the Phosphothreonine mark. Over residues 110-122 (RQLEDGDQPESKK) the composition is skewed to basic and acidic residues. K121 is covalently cross-linked (Glycyl lysine isopeptide (Lys-Gly) (interchain with G-Cter in SUMO1); alternate). A Glycyl lysine isopeptide (Lys-Gly) (interchain with G-Cter in SUMO2); alternate cross-link involves residue K121. Phosphoserine occurs at positions 125, 129, 131, 181, 184, 193, and 274. 3 consecutive KH domains span residues 144-208 (SMTE…KMML), 233-299 (GTVQ…CEMV), and 322-386 (GGGI…ARII). Residues 392–429 (SLRSGPPGPPGGPGMPPGGRGRGRGQGNWGPPGGEMTF) form a disordered region. Over residues 397 to 407 (PPGPPGGPGMP) the composition is skewed to pro residues. Residues 408–424 (PGGRGRGRGQGNWGPPG) show a composition bias toward gly residues. Omega-N-methylarginine occurs at positions 411, 413, 415, and 442. Residues 424–491 (GGEMTFSIPT…QQIDHAKQLI (68 aa)) form the KH 4 domain. S480 bears the Phosphoserine mark. The interval 497–569 (GPLCPVGPGP…HDPSKAAAAA (73 aa)) is disordered. Pro residues-rich tracts occupy residues 501 to 520 (PVGP…PFNP) and 528 to 542 (PGAP…PHQY). Copy 1 of the repeat occupies 571-582 (DPNAAWAAYYSH). The 4 X 12 AA imperfect repeats stretch occupies residues 571–684 (DPNAAWAAYY…SAAWAEYYRQ (114 aa)). The segment at 583-711 (YYQQPPGPVP…PTQQGQQQAQ (129 aa)) is disordered. Positions 587 to 613 (PPGPVPGPAPAPAAPPAQGEPPQPPPT) are enriched in pro residues. Tandem repeats lie at residues 617 to 628 (DYTKAWEEYYKK), 643 to 654 (DYTKAWEEYYKK), and 673 to 684 (DYSAAWAEYYRQ).

It belongs to the KHSRP family. Part of a ternary complex containing FUBP2, PTBP1, PTBP2 and HNRPH1. Interacts with PARN. Interacts with PQBP1. In terms of processing, phosphorylation at Ser-193 leads to the unfolding of the unstable KH domain 1, creating a site for 14-3-3 YWHAZ binding, which promotes nuclear localization and impairs the RNA degradation function. Detected in neural and non-neural cell lines.

It localises to the nucleus. It is found in the cytoplasm. Its function is as follows. Binds to the dendritic targeting element and may play a role in mRNA trafficking. Part of a ternary complex that binds to the downstream control sequence (DCS) of the pre-mRNA. Mediates exon inclusion in transcripts that are subject to tissue-specific alternative splicing. May interact with single-stranded DNA from the far-upstream element (FUSE). May activate gene expression. Also involved in degradation of inherently unstable mRNAs that contain AU-rich elements (AREs) in their 3'-UTR, possibly by recruiting degradation machinery to ARE-containing mRNAs. This Homo sapiens (Human) protein is Far upstream element-binding protein 2 (KHSRP).